The primary structure comprises 37 residues: Potassium channel toxin alpha-KTx 4.8 (37 aa).

Cystine bridges form between C13-C33 and C17-C35.

The protein belongs to the short scorpion toxin superfamily. Potassium channel inhibitor family. Alpha-KTx 04 subfamily. Expressed by the venom gland.

It is found in the secreted. In terms of biological role, reversible blocker of voltage-gated potassium channel Kv1.2/KCNA2 (Kd=65 nM) and calcium-activated potassium channels KCa2.2/KCNN2 (Kd=575 nM) and KCa3.1/KCNN4 (Kd=59 nM). In Centruroides margaritatus (Central American bark Scorpion), this protein is Potassium channel toxin alpha-KTx 4.8.